The sequence spans 832 residues: Tuftelin-interacting protein 11 (832 aa).

2 disordered regions span residues 1-21 and 33-145; these read MSMS…GVEI and NEFN…GNWE. Basic and acidic residues-rich tracts occupy residues 36-49 and 88-99; these read NPDR…KEEA and TAAEEKAEREGS. Over residues 121 to 130 the composition is skewed to polar residues; it reads TGGSFKTSQR. The 47-residue stretch at 148–194 folds into the G-patch domain; that stretch reads TRGIGQKLLQKMGYVPGKGLGKNAQGIVNPIEAKLRKGKGAVGAYGS. Ser-209 carries the phosphoserine modification.

This sequence belongs to the TFP11/STIP family. As to quaternary structure, identified in the spliceosome C complex.

The protein localises to the nucleus. Its function is as follows. Involved in pre-mRNA splicing, specifically in spliceosome disassembly during late-stage splicing events. The protein is Tuftelin-interacting protein 11 (tfip11) of Danio rerio (Zebrafish).